A 320-amino-acid polypeptide reads, in one-letter code: Cytochrome f (320 aa).

The signal sequence occupies residues 1–35; it reads MQTRNNFSWIKEQITRSISVSLMIYIITRASISNA. Positions 36, 56, 59, and 60 each coordinate heme. A helical transmembrane segment spans residues 286–306; sequence VQGLLFFLASVILAQIFLVLK.

This sequence belongs to the cytochrome f family. The 4 large subunits of the cytochrome b6-f complex are cytochrome b6, subunit IV (17 kDa polypeptide, petD), cytochrome f and the Rieske protein, while the 4 small subunits are PetG, PetL, PetM and PetN. The complex functions as a dimer. It depends on heme as a cofactor.

The protein localises to the plastid. It is found in the chloroplast thylakoid membrane. Component of the cytochrome b6-f complex, which mediates electron transfer between photosystem II (PSII) and photosystem I (PSI), cyclic electron flow around PSI, and state transitions. The protein is Cytochrome f of Lactuca sativa (Garden lettuce).